The primary structure comprises 305 residues: MCGIAGVVYKDGKLHSVGADMTRMLHALQHRGPDSAGFAIYGGLGLEENDYLLNIEVKDKPGLLDMVKETVELVSPIGSDEVIPSVENHIIYRCRITLESFSQLKPLIMDIDSIDDVIVLNGSHSFEMIKDVGSVLEIADRYDTWSKKGTHAIGHTRFSTESIVDRYHAHPFQSYIIPDITVVHNGQITNYWKIREPLERKGHIFETNNDTECIVHYVADKLASGYSLEEALEQSVKDMDGPFSYIVGTPQGVGIAKDQLGLRPGVMAENDEVFAVASEEVSLREVMDTSEVEQISPGEVRVYEI.

Cysteine 2 is an active-site residue. Residues 2–305 form the Glutamine amidotransferase type-2 domain; that stretch reads CGIAGVVYKD…SPGEVRVYEI (304 aa).

The protein is Putative glutamine amidotransferase MTH_191 of Methanothermobacter thermautotrophicus (strain ATCC 29096 / DSM 1053 / JCM 10044 / NBRC 100330 / Delta H) (Methanobacterium thermoautotrophicum).